We begin with the raw amino-acid sequence, 231 residues long: Nuclear transcription factor Y subunit C-9 (231 aa).

The disordered stretch occupies residues 211 to 231; it reads NPYMGQPMWQQQAPDQPDQEN.

It belongs to the NFYC/HAP5 subunit family. In terms of assembly, heterotrimeric transcription factor composed of three components, NF-YA, NF-YB and NF-YC. Interacts with NFYA2, NFYB2, CO and RGA. Interacts with REF6 (via N-terminus). As to expression, ubiquitous. Present in etiolated seedlings.

It localises to the nucleus. Its function is as follows. Stimulates the transcription of various genes by recognizing and binding to a CCAAT motif in promoters. Interacts with REF6 to directly regulate SOC1 transcription in response to flowering signals from photoperiod and gibberellic acid pathways. This Arabidopsis thaliana (Mouse-ear cress) protein is Nuclear transcription factor Y subunit C-9 (NFYC9).